Here is a 126-residue protein sequence, read N- to C-terminus: Protein VraC (126 aa).

This is Protein VraC from Staphylococcus haemolyticus (strain JCSC1435).